We begin with the raw amino-acid sequence, 170 residues long: Translationally-controlled tumor protein homolog (170 aa).

Positions 1–170 (MIIYKCIISG…FKDGLLAEKC (170 aa)) constitute a TCTP domain.

It belongs to the TCTP family.

The protein resides in the cytoplasm. Functionally, involved in calcium binding and microtubule stabilization. This Lateolabrax japonicus (Japanese sea perch) protein is Translationally-controlled tumor protein homolog (tpt1).